The chain runs to 53 residues: Large ribosomal subunit protein bL32c (53 aa).

This sequence belongs to the bacterial ribosomal protein bL32 family.

Its subcellular location is the plastid. It localises to the chloroplast. This Glycine max (Soybean) protein is Large ribosomal subunit protein bL32c.